Here is a 331-residue protein sequence, read N- to C-terminus: DNA-directed RNA polymerase subunit alpha (331 aa).

The segment at 1-242 is alpha N-terminal domain (alpha-NTD); sequence MEKFLRYNIQ…EHYKPIVTEL (242 aa). The interval 258-331 is alpha C-terminal domain (alpha-CTD); that stretch reads VSSSKSSLAI…RNLKLKEEQN (74 aa).

Belongs to the RNA polymerase alpha chain family. Homodimer. The RNAP catalytic core consists of 2 alpha, 1 beta, 1 beta' and 1 omega subunit. When a sigma factor is associated with the core the holoenzyme is formed, which can initiate transcription.

The enzyme catalyses RNA(n) + a ribonucleoside 5'-triphosphate = RNA(n+1) + diphosphate. Its function is as follows. DNA-dependent RNA polymerase catalyzes the transcription of DNA into RNA using the four ribonucleoside triphosphates as substrates. The chain is DNA-directed RNA polymerase subunit alpha from Malacoplasma penetrans (strain HF-2) (Mycoplasma penetrans).